The sequence spans 406 residues: Sorting nexin-6 (406 aa).

Met1 carries the N-acetylmethionine modification. Position 2 is an N-acetylmethionine; in Sorting nexin-6, N-terminally processed (Met2). The segment at 2 to 179 is interaction with PIM1; that stretch reads MEGLDDGPDF…NQDLSVRGKN (178 aa). One can recognise a PX domain in the interval 26 to 173; it reads LQSDAALQVD…HVFLEYNQDL (148 aa). A 1,2-diacyl-sn-glycero-3-phospho-(1D-myo-inositol-4,5-bisphosphate) contacts are provided by residues 41 to 47, 100 to 106, and 114 to 117; these read SERDKVK, FDASREK, and EGSM. A phosphoserine mark is found at Ser116 and Ser194. A membrane-binding amphipathic helix region spans residues 182–199; the sequence is EKLEDFFKNMVKSADGVI. The 204-residue stretch at 203–406 folds into the BAR domain; it reads VKDVDDFFEH…NCLAVLNGDT (204 aa).

The protein belongs to the sorting nexin family. Forms heterodimers with BAR domain-containing sorting nexins SNX1 and SNX2. The heterodimers are proposed to self-assemble into helical arrays on the membrane to stabilize and expand local membrane curvature underlying endosomal tubule formation. Thought to be a component of the originally described retromer complex (also called SNX-BAR retromer) which is a pentamer containing the heterotrimeric retromer cargo-selective complex (CSC), also described as vacuolar protein sorting subcomplex (VPS), and a heterodimeric membrane-deforming subcomplex formed between SNX1 or SNX2 and SNX5 or SNX6 (also called SNX-BAR subcomplex); the respective CSC and SNX-BAR subcomplexes associate with low affinity. Interacts with SNX1, SNX2, VPS26A, VPS29, VPS35, TGFB receptors, BACE1, BRMS1, PIP5K1C. Interacts with DCTN1; the association with DCTN1 is involved in movement of retromer-c ontaining vesicles toward the TGN. Interacts with PIM1; translocating SNX6 to the nucleus. Interacts with CDKN1B and GIT1. In vitro phosphorylated by PIM1; not affecting PIM1-dependent nuclear translocation.

It is found in the early endosome membrane. The protein resides in the cytoplasmic vesicle. The protein localises to the cytoplasm. It localises to the nucleus. Involved in several stages of intracellular trafficking. Interacts with membranes phosphatidylinositol 3,4-bisphosphate and/or phosphatidylinositol 4,5-bisphosphate. Acts in part as component of the retromer membrane-deforming SNX-BAR subcomplex. The SNX-BAR retromer mediates retrograde transport of cargo proteins from endosomes to the trans-Golgi network (TGN) and is involved in endosome-to-plasma membrane transport for cargo protein recycling. The SNX-BAR subcomplex functions to deform the donor membrane into a tubular profile called endosome-to-TGN transport carrier (ETC). Does not have in vitro vesicle-to-membrane remodeling activity. Involved in retrograde endosome-to-TGN transport of lysosomal enzyme receptor IGF2R. May function as link between transport vesicles and dynactin. Negatively regulates retrograde transport of BACE1 from the cell surface to the trans-Golgi network. Involved in E-cadherin sorting and degradation; inhibits PIP5K1C-mediated E-cadherin degradation. In association with GIT1 involved in EGFR degradation. Promotes lysosomal degradation of CDKN1B. May contribute to transcription regulation. In Pongo abelii (Sumatran orangutan), this protein is Sorting nexin-6 (SNX6).